The chain runs to 428 residues: Sorting nexin-31 (428 aa).

Positions 1–107 (MHICIPVTEE…EYFKKLQMDT (107 aa)) constitute a PX domain.

Belongs to the sorting nexin family.

May be involved in protein trafficking. The sequence is that of Sorting nexin-31 (snx31) from Xenopus tropicalis (Western clawed frog).